A 537-amino-acid polypeptide reads, in one-letter code: MYSVESKFERDSRRDAQRTANLDFDARVPIPFSVFPSSYRSDAVPETTLTRVEGEVNLDRTSHVEREDTRTSAPLPDPRVYGREEVDIHISKDRLHAPSRKGDDFQVIYEDRAHKDSRVPEVELSRERWKRSENNAKQNKNKNNTSTRRSGDVLKAVSAKKVAPQAQTRADEKASYQLTQKARYRESTSRYEPLPPKPVYDQALESQLDITEREYRRRTDPTYDVNLSYGRHQAPVDSYQAYQPQQTSDVSLHRSKTEIDVSYDKAYTPKPLETRKGDSFSRSELTVESVPSRPSSASSISQVKVLKPYTAIDQPPARKMGYYDDDGNYHSFRRGVERAVDRITHPFHHHHHHHDREEVVIADERGPVRYRDGVREDVRIVEPRASKTTAESVPIPCHFIRIGDILILQGRPCQVIRISVSPQTGQHRYLGVDLFTRQLQEESSFVSNPSPSVVVQTMLGPVYKTYRILDLHEDGTITAMTETGDVKQALPVVTQGQLFRKIRDAFSEGRGSVRALVINDGGRELVVDYKVIHGSRL.

Composition is skewed to basic and acidic residues over residues 1-17 (MYSV…RDAQ), 59-70 (DRTSHVEREDTR), and 116-134 (DSRV…RSEN). 4 disordered regions span residues 1–20 (MYSV…QRTA), 59–79 (DRTS…PDPR), 116–200 (DSRV…KPVY), and 269–295 (PKPL…SRPS). Over residues 135-144 (NAKQNKNKNN) the composition is skewed to low complexity. A compositionally biased stretch (basic and acidic residues) spans 272-281 (LETRKGDSFS).

The protein belongs to the eIF-5A family. Hex1 subfamily. Forms oligomers. Self-assembles into hexagonal rods. Binds directly or indirectly to the Woronin body tether lah.

It localises to the cell septum. It is found in the cytoplasm. Functionally, major component of Woronin bodies, fungal-specific organelles that occlude septal pores in order to separate intact from damaged compartments. HexA binds directly or indirectly to the Woronin body tether that in turn is anchored at the rim of the septal pore. Woronin bodies are important for stress resistance and virulence. This is Woronin body major protein hexA from Aspergillus fumigatus (strain ATCC MYA-4609 / CBS 101355 / FGSC A1100 / Af293) (Neosartorya fumigata).